A 541-amino-acid polypeptide reads, in one-letter code: Chaperonin GroEL 2 (541 aa).

Residues T29–P32, D86–T90, G413, N476–A478, and D492 each bind ATP.

The protein belongs to the chaperonin (HSP60) family. As to quaternary structure, forms a cylinder of 14 subunits composed of two heptameric rings stacked back-to-back. Interacts with the co-chaperonin GroES.

The protein resides in the secreted. The protein localises to the capsule. It localises to the cell surface. Its subcellular location is the cell wall. The catalysed reaction is ATP + H2O + a folded polypeptide = ADP + phosphate + an unfolded polypeptide.. Functionally, together with its co-chaperonin GroES, plays an essential role in assisting protein folding. The GroEL-GroES system forms a nano-cage that allows encapsulation of the non-native substrate proteins and provides a physical environment optimized to promote and accelerate protein folding. In Mycolicibacterium gilvum (strain PYR-GCK) (Mycobacterium gilvum (strain PYR-GCK)), this protein is Chaperonin GroEL 2.